A 129-amino-acid chain; its full sequence is Beta-galactoside-binding lectin (129 aa).

Ser1 is subject to N-acetylserine. The Galectin domain occupies 4-129 (GVVDERMSFK…EARIYSIEIK (126 aa)). An a beta-D-galactoside-binding site is contributed by 69–75 (WGTEQRE).

In terms of biological role, this protein binds beta-galactoside. Its physiological function is not yet known. The chain is Beta-galactoside-binding lectin from Electrophorus electricus (Electric eel).